Reading from the N-terminus, the 362-residue chain is Very-long-chain (3R)-3-hydroxyacyl-CoA dehydratase (362 aa).

At 1–149 the chain is on the cytoplasmic side; it reads MADCSLRPHV…DPFKHLKKGY (149 aa). The region spanning 5-94 is the CS domain; the sequence is SLRPHVHWAQ…KESSWWERLT (90 aa). A coiled-coil region spans residues 111 to 135; sequence LDESDAEMELKEKEEEKINKMKIES. The chain crosses the membrane as a helical span at residues 150–170; it reads LIMYNLVQFLGFSWIFVNMTV. Residues 171 to 189 lie on the Lumenal side of the membrane; it reads RLFILGKDSFYDTFHTIAD. The chain crosses the membrane as a helical span at residues 190–210; the sequence is MMYFCQTLALMEILNSLIGLV. Topologically, residues 211-212 are cytoplasmic; the sequence is RS. Residues 213–233 form a helical membrane-spanning segment; the sequence is PLIPAVIQVFGRNFILFVVLG. Residues 234–242 are Lumenal-facing; sequence SLEEMQSKA. Residues 243–263 form a helical membrane-spanning segment; sequence VVFFLFYFWSIIELFRYPYYM. The Cytoplasmic portion of the chain corresponds to 264–282; it reads LSCMGIEWKPLTWLRYTSW. Residues 283–303 form a helical membrane-spanning segment; that stretch reads IPLYPLGGLAEAVCLIQSIPI. Active-site residues include tyrosine 286 and glutamate 293. Over 304-319 the chain is Lumenal; sequence FSETGKFSLGLPNPLN. A helical transmembrane segment spans residues 320 to 340; the sequence is VTIQFSFLLQMYLIALFLGLF. Residues 341–362 are Cytoplasmic-facing; the sequence is VNFRYLYKQRKQHLGPKKRKMK.

Belongs to the very long-chain fatty acids dehydratase HACD family.

It localises to the endoplasmic reticulum membrane. It carries out the reaction a very-long-chain (3R)-3-hydroxyacyl-CoA = a very-long-chain (2E)-enoyl-CoA + H2O. The catalysed reaction is (3R)-hydroxyhexadecanoyl-CoA = (2E)-hexadecenoyl-CoA + H2O. The protein operates within lipid metabolism; fatty acid biosynthesis. Catalyzes the third of the four reactions of the long-chain fatty acids elongation cycle. This endoplasmic reticulum-bound enzymatic process, allows the addition of two carbons to the chain of long- and very long-chain fatty acids/VLCFAs per cycle. This enzyme catalyzes the dehydration of the 3-hydroxyacyl-CoA intermediate into trans-2,3-enoyl-CoA, within each cycle of fatty acid elongation. Thereby, it participates in the production of VLCFAs of different chain lengths that are involved in multiple biological processes as precursors of membrane lipids and lipid mediators. Involved in Rac1-signaling pathways leading to the modulation of gene expression. The polypeptide is Very-long-chain (3R)-3-hydroxyacyl-CoA dehydratase (Gallus gallus (Chicken)).